A 348-amino-acid chain; its full sequence is tRNA pseudouridine synthase D (348 aa).

Substrate is bound at residue Phe-26. The Nucleophile role is filled by Asp-79. Position 128 (Asn-128) interacts with substrate. One can recognise a TRUD domain in the interval 154-302; it reads GVPNYFGSQR…VDPARRALLL (149 aa). Substrate is bound at residue Phe-328.

This sequence belongs to the pseudouridine synthase TruD family.

It catalyses the reaction uridine(13) in tRNA = pseudouridine(13) in tRNA. Its function is as follows. Responsible for synthesis of pseudouridine from uracil-13 in transfer RNAs. The chain is tRNA pseudouridine synthase D from Serratia proteamaculans (strain 568).